The chain runs to 447 residues: Tektin-4 (447 aa).

Coiled coils occupy residues 114-143 (KSEL…RALD), 324-348 (KILS…DKEA), and 375-423 (FRLM…TNSL).

This sequence belongs to the tektin family. As to quaternary structure, microtubule inner protein component of sperm flagellar doublet microtubules. Ubiquitinated, leading to its degradation. Deubiquitinated by USP16, promoting its stability.

Its subcellular location is the cytoplasm. It is found in the cytoskeleton. The protein resides in the cilium axoneme. The protein localises to the flagellum axoneme. Functionally, microtubule inner protein (MIP) part of the dynein-decorated doublet microtubules (DMTs) in cilia and flagellar axoneme. Forms filamentous polymers in the walls of ciliary and flagellar microtubules. Contributes to normal sperm motility. In Rattus norvegicus (Rat), this protein is Tektin-4 (Tekt4).